A 357-amino-acid polypeptide reads, in one-letter code: MNTFGKKLTLTTFGESHGKAIGCILDGVPAGLRIDEAFIQSELDRRKPGKSKLETGRKEDDKVEILSGVFEGLSTGTPIAMIIFNTNQKSKDYDNVKDLFRPGHADFTYFHKYGIRDYRGGGRSSARETAARVAGGAVAKLMLKELGVEIQSGLCEVDGIKGNVQDFEYAKSSKLYALDPAVEAAQEEAILTAKENHDSVGGVVLTTATGVPVGLGEPLYYKLDAVLADAMMGINAAKAVEIGDGVASTHFKGSQNNDEITLQGFKSNHSGGTLGGISNGDTLIVKTHFKPTPSIFREQQTITTHDEEVVCNLKGRHDPCVAIRGAVVCEAMMALTLADMALLNMGKKMDHLKCIYG.

Arginine 46 serves as a coordination point for NADP(+). FMN is bound by residues 123–125 (RSS), 235–236 (NA), glycine 275, 290–294 (KPTPS), and arginine 316.

It belongs to the chorismate synthase family. Homotetramer. The cofactor is FMNH2.

It catalyses the reaction 5-O-(1-carboxyvinyl)-3-phosphoshikimate = chorismate + phosphate. It functions in the pathway metabolic intermediate biosynthesis; chorismate biosynthesis; chorismate from D-erythrose 4-phosphate and phosphoenolpyruvate: step 7/7. In terms of biological role, catalyzes the anti-1,4-elimination of the C-3 phosphate and the C-6 proR hydrogen from 5-enolpyruvylshikimate-3-phosphate (EPSP) to yield chorismate, which is the branch point compound that serves as the starting substrate for the three terminal pathways of aromatic amino acid biosynthesis. This reaction introduces a second double bond into the aromatic ring system. The chain is Chorismate synthase from Sulfurovum sp. (strain NBC37-1).